We begin with the raw amino-acid sequence, 438 residues long: UDP-N-acetylmuramoylalanine--D-glutamate ligase (438 aa).

112-118 (GSNGKST) is a binding site for ATP.

This sequence belongs to the MurCDEF family.

The protein resides in the cytoplasm. The catalysed reaction is UDP-N-acetyl-alpha-D-muramoyl-L-alanine + D-glutamate + ATP = UDP-N-acetyl-alpha-D-muramoyl-L-alanyl-D-glutamate + ADP + phosphate + H(+). It functions in the pathway cell wall biogenesis; peptidoglycan biosynthesis. Functionally, cell wall formation. Catalyzes the addition of glutamate to the nucleotide precursor UDP-N-acetylmuramoyl-L-alanine (UMA). In Yersinia pestis bv. Antiqua (strain Antiqua), this protein is UDP-N-acetylmuramoylalanine--D-glutamate ligase.